Reading from the N-terminus, the 465-residue chain is Tubulin gamma chain (465 aa).

144–150 contacts GTP; the sequence is AGGTGSG.

This sequence belongs to the tubulin family.

Its subcellular location is the cytoplasm. It is found in the cytoskeleton. The protein resides in the microtubule organizing center. The protein localises to the spindle pole body. Functionally, tubulin is the major constituent of microtubules. The gamma chain is found at microtubule organizing centers (MTOC) such as the spindle poles or the centrosome, suggesting that it is involved in the minus-end nucleation of microtubule assembly. The chain is Tubulin gamma chain (TUB4) from Candida glabrata (strain ATCC 2001 / BCRC 20586 / JCM 3761 / NBRC 0622 / NRRL Y-65 / CBS 138) (Yeast).